The chain runs to 308 residues: Spermidine synthase 1 (308 aa).

The PABS domain occupies 17 to 254; sequence PGWFSEISPL…GVIGFMLCST (238 aa). Gln48 provides a ligand contact to S-adenosyl 3-(methylsulfanyl)propylamine. Position 78 (Tyr78) interacts with putrescine. S-adenosyl 3-(methylsulfanyl)propylamine-binding positions include Gln79, Asp103, Glu123, 154–155, and Asp173; that span reads DG. Asp173 functions as the Proton acceptor in the catalytic mechanism. Residues 173-176 and Tyr242 each bind putrescine; that span reads DSSD.

It belongs to the spermidine/spermine synthase family.

The enzyme catalyses S-adenosyl 3-(methylsulfanyl)propylamine + putrescine = S-methyl-5'-thioadenosine + spermidine + H(+). It participates in amine and polyamine biosynthesis; spermidine biosynthesis; spermidine from putrescine: step 1/1. The chain is Spermidine synthase 1 from Datura stramonium (Jimsonweed).